Here is a 133-residue protein sequence, read N- to C-terminus: ATP synthase epsilon chain (133 aa).

This sequence belongs to the ATPase epsilon chain family. F-type ATPases have 2 components, CF(1) - the catalytic core - and CF(0) - the membrane proton channel. CF(1) has five subunits: alpha(3), beta(3), gamma(1), delta(1), epsilon(1). CF(0) has three main subunits: a, b and c.

Its subcellular location is the cell membrane. In terms of biological role, produces ATP from ADP in the presence of a proton gradient across the membrane. This is ATP synthase epsilon chain (atpC) from Clostridium acetobutylicum (strain ATCC 824 / DSM 792 / JCM 1419 / IAM 19013 / LMG 5710 / NBRC 13948 / NRRL B-527 / VKM B-1787 / 2291 / W).